The primary structure comprises 93 residues: MATFKKFNKDKRPKRNTQSLLFKRKRFCRFTVAGVEEIDYKDIDTLRDFISENGKIIPARLTGTRAIYQRQLNTAIKRARFLAMVPYSDQHRV.

The protein belongs to the bacterial ribosomal protein bS18 family. Part of the 30S ribosomal subunit. Forms a tight heterodimer with protein bS6.

In terms of biological role, binds as a heterodimer with protein bS6 to the central domain of the 16S rRNA, where it helps stabilize the platform of the 30S subunit. This is Small ribosomal subunit protein bS18 from Variovorax paradoxus (strain S110).